A 301-amino-acid chain; its full sequence is Probable alpha-L-glutamate ligase (301 aa).

Residues 104 to 287 (MQLLSRKGIG…VAGLIVDFIE (184 aa)) form the ATP-grasp domain. ATP contacts are provided by residues lysine 141, 178–179 (EF), aspartate 187, and 211–213 (RSN). Mg(2+) contacts are provided by aspartate 248, glutamate 260, and asparagine 262. 3 residues coordinate Mn(2+): aspartate 248, glutamate 260, and asparagine 262.

The protein belongs to the RimK family. Mg(2+) is required as a cofactor. The cofactor is Mn(2+).

This Aliivibrio salmonicida (strain LFI1238) (Vibrio salmonicida (strain LFI1238)) protein is Probable alpha-L-glutamate ligase.